Here is a 352-residue protein sequence, read N- to C-terminus: MVFRIASSPYTHNQRQTSRIMLLVLLAAVPGIAAQLWFFGWGTLVQILLASVSALLAEALVLKLRKQSVAATLKDNSALLTGLLLAVSIPPLAPWWMVVLGTVFAVIIAKQLYGGLGQNPFNPAMIGYVVLLISFPVQMTSWLPPHEIAVNIPGFIDAIQVIFSGHTASGGDMNTLRLGIDGISQATPLDTFKTSVRAGHSVEQIMQYPIYSGILAGAGWQWVNLAWLAGGVWLLWQKAIRWHIPLSFLVTLALCATLGWLFSPETLAAPQIHLLSGATMLGAFFILTDPVTASTTNRGRLMFGALAGLLVWLIRSFGGYPDGVAFAVLLANITVPLIDYYTRPRVYGHRKG.

The next 5 membrane-spanning stretches (helical) occupy residues 20 to 40 (IMLL…WFFG), 42 to 62 (GTLV…ALVL), 78 to 109 (ALLT…VIIA), 123 to 143 (PAMI…TSWL), and 148 to 168 (IAVN…GHTA). FMN phosphoryl threonine is present on threonine 187. Helical transmembrane passes span 214–234 (ILAG…GVWL), 242–262 (WHIP…GWLF), 267–287 (LAAP…FFIL), and 301–318 (LMFG…RSFG).

This sequence belongs to the NqrB/RnfD family. In terms of assembly, the complex is composed of six subunits: RsxA, RsxB, RsxC, RsxD, RsxE and RsxG. Requires FMN as cofactor.

Its subcellular location is the cell inner membrane. Part of a membrane-bound complex that couples electron transfer with translocation of ions across the membrane. Required to maintain the reduced state of SoxR. This Shigella flexneri serotype 5b (strain 8401) protein is Ion-translocating oxidoreductase complex subunit D.